The primary structure comprises 196 residues: Large ribosomal subunit protein bL9c (196 aa).

The N-terminal 41 residues, 1-41 (MASTTSTLSLSWSNSFHSFAGAISEPQKSPENCRVMLPIVA), are a transit peptide targeting the chloroplast.

In terms of assembly, component of the chloroplast large ribosomal subunit (LSU). Mature 70S chloroplast ribosomes of higher plants consist of a small (30S) and a large (50S) subunit. The 30S small subunit contains 1 molecule of ribosomal RNA (16S rRNA) and 24 different proteins. The 50S large subunit contains 3 rRNA molecules (23S, 5S and 4.5S rRNA) and 33 different proteins.

The protein localises to the plastid. The protein resides in the chloroplast. In terms of biological role, component of the chloroplast ribosome (chloro-ribosome), a dedicated translation machinery responsible for the synthesis of chloroplast genome-encoded proteins, including proteins of the transcription and translation machinery and components of the photosynthetic apparatus. This chain is Large ribosomal subunit protein bL9c (RPL9), found in Spinacia oleracea (Spinach).